The chain runs to 387 residues: 3-ketoacyl-CoA thiolase (387 aa).

Residue cysteine 91 is the Acyl-thioester intermediate of the active site. Residues histidine 343 and cysteine 373 each act as proton acceptor in the active site.

Belongs to the thiolase-like superfamily. Thiolase family. Heterotetramer of two alpha chains (FadB) and two beta chains (FadA).

It is found in the cytoplasm. The enzyme catalyses an acyl-CoA + acetyl-CoA = a 3-oxoacyl-CoA + CoA. It participates in lipid metabolism; fatty acid beta-oxidation. In terms of biological role, catalyzes the final step of fatty acid oxidation in which acetyl-CoA is released and the CoA ester of a fatty acid two carbons shorter is formed. The sequence is that of 3-ketoacyl-CoA thiolase from Salmonella choleraesuis (strain SC-B67).